Consider the following 740-residue polypeptide: MFGLSVNHAYAGPGIFINDGTDDGCIWTFDKEDYSPIGDYFGNTAPADKDSAGRNSPASVKYHIPSIQQLGGAATLKCLSKDRDTQTDRVLFYGNSKEQGSISLTLGGELFVNNGNLGLGGGTDTKAMRIGSMATLTGPSGLRSLAIGAGEIATVASGDDAIAIGTAAQAAHVGSIALGLQSTTELPSLVKDVTINGIKLSAFAGSNPASVLSIGNDTLKRSITNVGAGRVSKDSTDAVNGRQLFAVSEQAASGWSLTVNGMDKSRVGPGDTVDLSNSDGNLVLSKKGKDVTFNLASDLKVTSLVAGNTFLDTNGLVITGGPSMTVSGIDAGQLKISHVADGAVTVTSTDAVNGSQLHRVAHTIAEHLGGDAHVNADGSVIGPQYTVQKKRYKTIYDAFGGVDENLANINDILHDIESGGGIKYFHANSIGADSRALGTNSIAVGSDSVASGEGSISVGNGAQASAHGSVALGENAAAPDANSVALGAGSKTSEVVATKGTTINGQYYDFAGDAPSGTVSVGDKGAERTITNVAAGRISVESTDAVNGSQLNAVNQAIENLAAGVTENDKFSVKYDRHSDGTKKNSMTLQGWDSATPVVLANVADGVHKNDAVNVSQLKAGLSTTLGEAKAYTDQTALQTLDQANAYTDKKFGKLNEDIVATRIEARQAAAIGLAAASLRYDDRPGKISAAIGGGFWRGEGAVALGLGHTSEDQRMRSNLSAATSGGNWGMGAGFSYTFN.

The N-terminal stretch at 1–11 (MFGLSVNHAYA) is a signal peptide. The tract at residues 12–647 (GPGIFINDGT…LQTLDQANAY (636 aa)) is surface exposed passenger domain. Positions 648-686 (TDKKFGKLNEDIVATRIEARQAAAIGLAAASLRYDDRPG) are outer membrane translocation of the passenger domain. The next 4 beta stranded transmembrane spans lie at 686 to 696 (GKISAAIGGGF), 700 to 710 (EGAVALGLGHT), 719 to 725 (NLSAATS), and 728 to 739 (NWGMGAGFSYTF). A translocator domain region spans residues 687 to 740 (KISAAIGGGFWRGEGAVALGLGHTSEDQRMRSNLSAATSGGNWGMGAGFSYTFN).

The protein belongs to the autotransporter-2 (AT-2) (TC 1.B.40) family. As to quaternary structure, homotrimer.

The protein localises to the cell surface. The protein resides in the cell outer membrane. Binds to hyaluronic acid and epithelial cells, and is required for full virulence in the mouse model. The sequence is that of Autotransporter adhesin BtaE from Brucella suis biovar 1 (strain 1330).